The chain runs to 512 residues: Hyaluronidase PH-20 (512 aa).

An N-terminal signal peptide occupies residues 1–35 (MGELQFKWLFWRSFAESGGTFQTVLIFLFIPYSLT). 2 disulfide bridges follow: Cys60–Cys351 and Cys223–Cys237. Residue Asn63 is glycosylated (N-linked (GlcNAc...) asparagine). Glu147 (proton donor) is an active-site residue. Residues Asn165 and Asn179 are each glycosylated (N-linked (GlcNAc...) asparagine). An N-linked (GlcNAc...) asparagine glycan is attached at Asn368. Cystine bridges form between Cys376–Cys387, Cys381–Cys435, and Cys437–Cys464. Residue Asn408 is glycosylated (N-linked (GlcNAc...) asparagine).

It belongs to the glycosyl hydrolase 56 family.

It localises to the cell membrane. It catalyses the reaction Random hydrolysis of (1-&gt;4)-linkages between N-acetyl-beta-D-glucosamine and D-glucuronate residues in hyaluronate.. Functionally, involved in sperm-egg adhesion. Upon fertilization sperm must first penetrate a layer of cumulus cells that surrounds the egg before reaching the zona pellucida. The cumulus cells are embedded in a matrix containing hyaluronic acid which is formed prior to ovulation. This protein aids in penetrating the layer of cumulus cells by digesting hyaluronic acid. In Rattus norvegicus (Rat), this protein is Hyaluronidase PH-20 (Spam1).